The chain runs to 391 residues: 1-deoxy-D-xylulose 5-phosphate reductoisomerase (391 aa).

Positions 17, 18, 19, 20, 47, and 130 each coordinate NADPH. Residue Lys131 participates in 1-deoxy-D-xylulose 5-phosphate binding. Glu132 is a binding site for NADPH. Asp156 contacts Mn(2+). Residues Ser157, Glu158, Ser182, and His205 each contribute to the 1-deoxy-D-xylulose 5-phosphate site. Residue Glu158 coordinates Mn(2+). Gly211 is a binding site for NADPH. 1-deoxy-D-xylulose 5-phosphate-binding residues include Ser218, Asn223, Lys224, and Glu227. Glu227 is a Mn(2+) binding site.

Belongs to the DXR family. Mg(2+) serves as cofactor. The cofactor is Mn(2+).

The catalysed reaction is 2-C-methyl-D-erythritol 4-phosphate + NADP(+) = 1-deoxy-D-xylulose 5-phosphate + NADPH + H(+). It functions in the pathway isoprenoid biosynthesis; isopentenyl diphosphate biosynthesis via DXP pathway; isopentenyl diphosphate from 1-deoxy-D-xylulose 5-phosphate: step 1/6. Catalyzes the NADPH-dependent rearrangement and reduction of 1-deoxy-D-xylulose-5-phosphate (DXP) to 2-C-methyl-D-erythritol 4-phosphate (MEP). The protein is 1-deoxy-D-xylulose 5-phosphate reductoisomerase of Sinorhizobium fredii (strain NBRC 101917 / NGR234).